The primary structure comprises 327 residues: D-alanine--D-alanine ligase (327 aa).

The ATP-grasp domain occupies K113–A312. Position 139 to 194 (V139 to T194) interacts with ATP. Mg(2+)-binding residues include D266, E279, and N281.

It belongs to the D-alanine--D-alanine ligase family. Mg(2+) serves as cofactor. Requires Mn(2+) as cofactor.

The protein resides in the cytoplasm. The enzyme catalyses 2 D-alanine + ATP = D-alanyl-D-alanine + ADP + phosphate + H(+). Its pathway is cell wall biogenesis; peptidoglycan biosynthesis. Functionally, cell wall formation. The protein is D-alanine--D-alanine ligase of Cupriavidus metallidurans (strain ATCC 43123 / DSM 2839 / NBRC 102507 / CH34) (Ralstonia metallidurans).